The chain runs to 156 residues: ATP synthase subunit b (156 aa).

The chain crosses the membrane as a helical span at residues 7–29 (LFAQMVVFLVLAWFTMKFVWPPL).

Belongs to the ATPase B chain family. In terms of assembly, F-type ATPases have 2 components, F(1) - the catalytic core - and F(0) - the membrane proton channel. F(1) has five subunits: alpha(3), beta(3), gamma(1), delta(1), epsilon(1). F(0) has three main subunits: a(1), b(2) and c(10-14). The alpha and beta chains form an alternating ring which encloses part of the gamma chain. F(1) is attached to F(0) by a central stalk formed by the gamma and epsilon chains, while a peripheral stalk is formed by the delta and b chains.

It localises to the cell inner membrane. Its function is as follows. F(1)F(0) ATP synthase produces ATP from ADP in the presence of a proton or sodium gradient. F-type ATPases consist of two structural domains, F(1) containing the extramembraneous catalytic core and F(0) containing the membrane proton channel, linked together by a central stalk and a peripheral stalk. During catalysis, ATP synthesis in the catalytic domain of F(1) is coupled via a rotary mechanism of the central stalk subunits to proton translocation. In terms of biological role, component of the F(0) channel, it forms part of the peripheral stalk, linking F(1) to F(0). The polypeptide is ATP synthase subunit b (Burkholderia ambifaria (strain MC40-6)).